A 137-amino-acid polypeptide reads, in one-letter code: Large ribosomal subunit protein uL16 (137 aa).

Residues 1–17 show a composition bias toward basic residues; it reads MLQPKRTKFRKTHKGRN. A disordered region spans residues 1 to 23; the sequence is MLQPKRTKFRKTHKGRNRGLAQN.

It belongs to the universal ribosomal protein uL16 family. As to quaternary structure, part of the 50S ribosomal subunit.

Its function is as follows. Binds 23S rRNA and is also seen to make contacts with the A and possibly P site tRNAs. This Pseudoalteromonas translucida (strain TAC 125) protein is Large ribosomal subunit protein uL16.